The sequence spans 788 residues: Protein translocase subunit SecA (788 aa).

ATP is bound by residues Gln-85, Gly-103–Thr-107, and Asp-494.

It belongs to the SecA family. Monomer and homodimer. Part of the essential Sec protein translocation apparatus which comprises SecA, SecYEG and auxiliary proteins SecDF. Other proteins may also be involved.

It is found in the cell membrane. Its subcellular location is the cytoplasm. The catalysed reaction is ATP + H2O + cellular proteinSide 1 = ADP + phosphate + cellular proteinSide 2.. In terms of biological role, part of the Sec protein translocase complex. Interacts with the SecYEG preprotein conducting channel. Has a central role in coupling the hydrolysis of ATP to the transfer of proteins into and across the cell membrane, serving as an ATP-driven molecular motor driving the stepwise translocation of polypeptide chains across the membrane. The polypeptide is Protein translocase subunit SecA (Oenococcus oeni (strain ATCC BAA-331 / PSU-1)).